The sequence spans 153 residues: Ribosome maturation factor RimP (153 aa).

This sequence belongs to the RimP family.

The protein localises to the cytoplasm. Its function is as follows. Required for maturation of 30S ribosomal subunits. The polypeptide is Ribosome maturation factor RimP (Burkholderia pseudomallei (strain 1710b)).